The primary structure comprises 529 residues: AT hook-containing protein attf-4 (529 aa).

4 disordered regions span residues 1–39 (MLQP…MEDD), 131–158 (QVVH…KPIE), 173–200 (GGGG…FPPP), and 233–255 (VSAN…DHLE). Composition is skewed to polar residues over residues 19 to 31 (SVST…SPSN) and 138 to 153 (QNGS…TSEN). Over residues 179–189 (IHTERLSEPAR) the composition is skewed to basic and acidic residues. Residues 233 to 248 (VSANTSTASPGPSSEG) are compositionally biased toward low complexity. A DNA-binding region (a.T hook) is located at residues 307–319 (GRGRGRPKLIGDE). The tract at residues 436-476 (LEGGSPPASSSSTATTSTATKTVKQESKNGHQNEENLNVKQ) is disordered. Low complexity predominate over residues 443 to 455 (ASSSSTATTSTAT). Positions 458–469 (VKQESKNGHQNE) are enriched in basic and acidic residues.

The polypeptide is AT hook-containing protein attf-4 (Caenorhabditis elegans).